Consider the following 398-residue polypeptide: MDSSAGPGNISDCSDPLAPASCSPAPGSWLNLSHVDGNQSDPCGPNRTGLGGSHSLCPQTGSPSMVTAITIMALYSIVCVVGLFGNFLVMYVIVRYTKMKTATNIYIFNLALADALATSTLPFQSVNYLMGTWPFGNILCKIVISIDYYNMFTSIFTLCTMSVDRYIAVCHPVKALDFRTPRNAKIVNVCNWILSSAIGLPVMFMATTKYRQGSIDCTLTFSHPTWYWENLLKICVFIFAFIMPVLIITVCYGLMILRLKSVRMLSGSKEKDRNLRRITRMVLVVVAVFIVCWTPIHIYVIIKALITIPETTFQTVSWHFCIALGYTNSCLNPVLYAFLDENFKRCFREFCIPTSSTIEQQNSARIRQNTREHPSTANTVDRTNHQLENLEAETAPLP.

At 1–66 the chain is on the extracellular side; sequence MDSSAGPGNI…CPQTGSPSMV (66 aa). Asparagine 9, asparagine 31, asparagine 38, and asparagine 46 each carry an N-linked (GlcNAc...) asparagine glycan. A helical membrane pass occupies residues 67-91; it reads TAITIMALYSIVCVVGLFGNFLVMY. At 92-104 the chain is on the cytoplasmic side; that stretch reads VIVRYTKMKTATN. The helical transmembrane segment at 105–129 threads the bilayer; it reads IYIFNLALADALATSTLPFQSVNYL. Topologically, residues 130 to 140 are extracellular; sequence MGTWPFGNILC. Residues cysteine 140 and cysteine 217 are joined by a disulfide bond. The chain crosses the membrane as a helical span at residues 141 to 163; the sequence is KIVISIDYYNMFTSIFTLCTMSV. At 164–183 the chain is on the cytoplasmic side; the sequence is DRYIAVCHPVKALDFRTPRN. At tyrosine 166 the chain carries Phosphotyrosine. A helical membrane pass occupies residues 184 to 205; sequence AKIVNVCNWILSSAIGLPVMFM. Topologically, residues 206 to 228 are extracellular; the sequence is ATTKYRQGSIDCTLTFSHPTWYW. A helical transmembrane segment spans residues 229-253; sequence ENLLKICVFIFAFIMPVLIITVCYG. Residues 254 to 277 lie on the Cytoplasmic side of the membrane; sequence LMILRLKSVRMLSGSKEKDRNLRR. Residues 278–304 traverse the membrane as a helical segment; the sequence is ITRMVLVVVAVFIVCWTPIHIYVIIKA. At 305 to 312 the chain is on the extracellular side; the sequence is LITIPETT. A helical transmembrane segment spans residues 313-336; that stretch reads FQTVSWHFCIALGYTNSCLNPVLY. An NPxxY; plays a role in stabilizing the activated conformation of the receptor motif is present at residues 332–336; it reads NPVLY. Over 337 to 398 the chain is Cytoplasmic; that stretch reads AFLDENFKRC…NLEAETAPLP (62 aa). A lipid anchor (S-palmitoyl cysteine) is attached at cysteine 351. Residues 362–383 are disordered; the sequence is NSARIRQNTREHPSTANTVDRT. Position 363 is a phosphoserine (serine 363). Phosphothreonine is present on threonine 370. Phosphoserine is present on serine 375. A Phosphothreonine modification is found at threonine 394.

It belongs to the G-protein coupled receptor 1 family. In terms of assembly, forms homooligomers and heterooligomers with other GPCRs, such as OPRD1, OPRK1, OPRL1, NPFFR2, ADRA2A, SSTR2, CNR1 and CCR5 (probably in dimeric forms). Interacts with heterotrimeric G proteins; interaction with a heterotrimeric complex containing GNAI1, GNB1 and GNG2 stabilizes the active conformation of the receptor and increases its affinity for endomorphin-2, the synthetic opioid peptide DAMGO and for morphinan agonists. Interacts with PPL; the interaction disrupts agonist-mediated G-protein activation. Interacts (via C-terminus) with DNAJB4 (via C-terminus). Interacts with calmodulin; the interaction inhibits the constitutive activity of OPRM1; it abolishes basal and attenuates agonist-stimulated G-protein coupling. Interacts with FLNA, PLD2, RANBP9 and WLS and GPM6A. Interacts with RTP4. Interacts with SYP and GNAS. Interacts with RGS9, RGS17, RGS20, RGS4, PPP1R9B and HINT1. Isoform 9 interacts with GRPR. Phosphorylated. Differentially phosphorylated in basal and agonist-induced conditions. Agonist-mediated phosphorylation modulates receptor internalization. Phosphorylated by GRK2 in a agonist-dependent manner. Phosphorylation at Tyr-166 requires receptor activation, is dependent on non-receptor protein tyrosine kinase Src and results in a decrease in agonist efficacy by reducing G-protein coupling efficiency. Phosphorylated on tyrosine residues; the phosphorylation is involved in agonist-induced G-protein-independent receptor down-regulation. Phosphorylation at Ser-375 is involved in G-protein-dependent but not beta-arrestin-dependent activation of the ERK pathway. Post-translationally, ubiquitinated. A basal ubiquitination seems not to be related to degradation. Ubiquitination is increased upon formation of OPRM1:OPRD1 oligomers leading to proteasomal degradation; the ubiquitination is diminished by RTP4.

It is found in the cell membrane. The protein localises to the cell projection. Its subcellular location is the axon. It localises to the perikaryon. The protein resides in the dendrite. It is found in the endosome. In terms of biological role, receptor for endogenous opioids such as beta-endorphin and endomorphin. Receptor for natural and synthetic opioids including morphine, heroin, DAMGO, fentanyl, etorphine, buprenorphin and methadone. Also activated by enkephalin peptides, such as Met-enkephalin or Met-enkephalin-Arg-Phe, with higher affinity for Met-enkephalin-Arg-Phe. Agonist binding to the receptor induces coupling to an inactive GDP-bound heterotrimeric G-protein complex and subsequent exchange of GDP for GTP in the G-protein alpha subunit leading to dissociation of the G-protein complex with the free GTP-bound G-protein alpha and the G-protein beta-gamma dimer activating downstream cellular effectors. The agonist- and cell type-specific activity is predominantly coupled to pertussis toxin-sensitive G(i) and G(o) G alpha proteins, GNAI1, GNAI2, GNAI3 and GNAO1 isoforms Alpha-1 and Alpha-2, and to a lesser extent to pertussis toxin-insensitive G alpha proteins GNAZ and GNA15. They mediate an array of downstream cellular responses, including inhibition of adenylate cyclase activity and both N-type and L-type calcium channels, activation of inward rectifying potassium channels, mitogen-activated protein kinase (MAPK), phospholipase C (PLC), phosphoinositide/protein kinase (PKC), phosphoinositide 3-kinase (PI3K) and regulation of NF-kappa-B. Also couples to adenylate cyclase stimulatory G alpha proteins. The selective temporal coupling to G-proteins and subsequent signaling can be regulated by RGSZ proteins, such as RGS9, RGS17 and RGS4. Phosphorylation by members of the GPRK subfamily of Ser/Thr protein kinases and association with beta-arrestins is involved in short-term receptor desensitization. Beta-arrestins associate with the GPRK-phosphorylated receptor and uncouple it from the G-protein thus terminating signal transduction. The phosphorylated receptor is internalized through endocytosis via clathrin-coated pits which involves beta-arrestins. The activation of the ERK pathway occurs either in a G-protein-dependent or a beta-arrestin-dependent manner and is regulated by agonist-specific receptor phosphorylation. Acts as a class A G-protein coupled receptor (GPCR) which dissociates from beta-arrestin at or near the plasma membrane and undergoes rapid recycling. Receptor down-regulation pathways are varying with the agonist and occur dependent or independent of G-protein coupling. Endogenous ligands induce rapid desensitization, endocytosis and recycling. Heterooligomerization with other GPCRs can modulate agonist binding, signaling and trafficking properties. Isoform 9 is involved in morphine-induced scratching and seems to cross-activate GRPR in response to morphine. The sequence is that of Mu-type opioid receptor (Oprm1) from Mus musculus (Mouse).